Consider the following 754-residue polypeptide: Probable beta-glucosidase D (754 aa).

A signal peptide spans 1–20; the sequence is MKVLSFIVAAALLGLTGASS. N-linked (GlcNAc...) asparagine glycosylation is found at Asn66, Asn69, and Asn186. The segment at 186–206 is disordered; that stretch reads NRTGGGGGGGGDSGSAPYSSN. Gly residues predominate over residues 188 to 198; it reads TGGGGGGGGDS. Asn239 carries N-linked (GlcNAc...) asparagine glycosylation. Residue Asp267 is part of the active site. Residues Asn301, Asn345, Asn443, Asn512, Asn534, Asn573, Asn588, Asn655, and Asn745 are each glycosylated (N-linked (GlcNAc...) asparagine).

It belongs to the glycosyl hydrolase 3 family.

The protein localises to the secreted. The catalysed reaction is Hydrolysis of terminal, non-reducing beta-D-glucosyl residues with release of beta-D-glucose.. It participates in glycan metabolism; cellulose degradation. Functionally, beta-glucosidases are one of a number of cellulolytic enzymes involved in the degradation of cellulosic biomass. Catalyzes the last step releasing glucose from the inhibitory cellobiose. In Aspergillus niger (strain ATCC MYA-4892 / CBS 513.88 / FGSC A1513), this protein is Probable beta-glucosidase D (bglD).